A 147-amino-acid chain; its full sequence is Hemoglobin anodic subunit beta (147 aa).

Residues 2–147 (EWTEDERTAI…VTSALARQYH (146 aa)) form the Globin domain. Heme b contacts are provided by histidine 63 and histidine 92.

This sequence belongs to the globin family. In terms of assembly, heterotetramer of two alpha chains and two beta chains. In terms of tissue distribution, red blood cells.

Its function is as follows. Involved in oxygen transport from gills to the various peripheral tissues. The protein is Hemoglobin anodic subunit beta (hbb1) of Anguilla anguilla (European freshwater eel).